Reading from the N-terminus, the 285-residue chain is NAD kinase (285 aa).

D66 serves as the catalytic Proton acceptor. Residues 66 to 67 (DG), 137 to 138 (ND), R148, R165, D167, and 178 to 183 (TAYSLS) each bind NAD(+).

It belongs to the NAD kinase family. A divalent metal cation is required as a cofactor.

The protein resides in the cytoplasm. It carries out the reaction NAD(+) + ATP = ADP + NADP(+) + H(+). Involved in the regulation of the intracellular balance of NAD and NADP, and is a key enzyme in the biosynthesis of NADP. Catalyzes specifically the phosphorylation on 2'-hydroxyl of the adenosine moiety of NAD to yield NADP. This Chlorobium phaeobacteroides (strain BS1) protein is NAD kinase.